Consider the following 733-residue polypeptide: MNLGSEQILPEDFYLAEEGALLEEMAEEDEEIDLYNEVTFGLDQESDEEPVKLEDDHTKPIQMPEAPKEEEPEALQPVKEAKGSEKAPLHEVKIVVEPHEDHVDLSIDSGGHTMNSTMDDSELGDPAVMKAFHGKPTLESLDSAVVDSGIGSTWSELDTDYDQSGMDSGLWEASPKVSTYATGQILEDKAILRIMERAPYLPPTNLEFLGSPLQRGFMPSQRLQGPEMGAMSPKPYRPRFMRQQSPLVPRSMRPSYPFTPPRRGPSVFAPNQSPGFVSQTPFRPMSPNVSTPTRPMTPKMVRMHFGPMSPSPSFSPFFSPMGNALQRFKVPGHVTQLHPQHRRILSQRQRPQSSSRRQWESRPDPYASLMSQKEKEWVIKLQMIQLQSENPHLDDYYYQAYYENLERKLSEEEFLGERKKREPTKLVTPYIQKAETYESVVHIEGSLGQVAVSTCYSPRRAIDAVSYAMPDEAIKALGYQRLRVLKHAEKVFLMFLEVEELARKMSHIPEEEHVHFQHKQNYKVQRIYDVLKIAPCHNEEESEFLQLLQVGKGKKLVARLLPFLRSEQAREILLLVVQHLTFLIKNDSAEESLSVLYGPLKTIINGLSFTELIGVTQELTRPLPESNDLPLTLAFQNQFGISLLYCLLSHGERLLSSDLPMEPCIGDFEKWTDTVFLVAKELSHVSKSSMVEPLFLPSNLLSLFCRYLDKQTIHKLEDKMECPVIPPYTAVPS.

Disordered regions lie at residues 42–75 and 337–366; these read LDQE…PEAL and LHPQ…PDPY. Over residues 49–59 the composition is skewed to basic and acidic residues; the sequence is EPVKLEDDHTK. Positions 346-356 are enriched in low complexity; that stretch reads SQRQRPQSSSR.

The protein belongs to the PAT1 family. In terms of assembly, interacts with ribonucleoprotein complex components. Interacts with cpeb. Oocyte-specific protein. Expressed throughout oogenesis but is not detectable in eggs, embryos, nor in adult tissues (at protein level).

It localises to the cytoplasm. Its subcellular location is the nucleus. RNA-binding protein that acts as a translational repressor. When overexpressed, able to disperse P-bodies. This is Protein PAT1 homolog 2 (patl2) from Xenopus laevis (African clawed frog).